The primary structure comprises 209 residues: Uracil phosphoribosyltransferase (209 aa).

Residues Arg79, Arg104, and 131–139 (DPMLATGGS) contribute to the 5-phospho-alpha-D-ribose 1-diphosphate site. Uracil-binding positions include Ile194 and 199 to 201 (GDA). Asp200 provides a ligand contact to 5-phospho-alpha-D-ribose 1-diphosphate.

Belongs to the UPRTase family. The cofactor is Mg(2+).

The enzyme catalyses UMP + diphosphate = 5-phospho-alpha-D-ribose 1-diphosphate + uracil. It participates in pyrimidine metabolism; UMP biosynthesis via salvage pathway; UMP from uracil: step 1/1. Allosterically activated by GTP. Functionally, catalyzes the conversion of uracil and 5-phospho-alpha-D-ribose 1-diphosphate (PRPP) to UMP and diphosphate. In Clostridium tetani (strain Massachusetts / E88), this protein is Uracil phosphoribosyltransferase.